Consider the following 1514-residue polypeptide: Mitogen-activated protein kinase-binding protein 1 (1514 aa).

N-acetylalanine is present on alanine 2. WD repeat units follow at residues 88–129 (SSRK…QVAE), 132–173 (EHKY…VVAS), 175–213 (KVSS…TSKV), 276–315 (DSFT…FLST), 342–381 (ARYP…KVGK), 387–436 (YHSS…VHGS), 477–516 (DPRV…EMLK), 519–561 (AHDS…SLQQ), 565–606 (EHSS…DGVQ), 614–653 (VRKT…QKKL), 659–698 (GEDG…CVAT), and 701–740 (GHSE…TISM). Disordered stretches follow at residues 748–804 (RQRQ…PALP), 880–925 (PSLQ…SQPC), 951–1256 (EDGI…SSMA), and 1299–1336 (DIPK…GLGK). Over residues 789–800 (KEGEDEGTEEEL) the composition is skewed to acidic residues. 2 stretches are compositionally biased toward polar residues: residues 905–925 (LETS…SQPC) and 961–971 (DNPTMDTSEFQ). Residues 996–1011 (DSACSVDYSSSCLSSP) show a composition bias toward low complexity. Residues 1032 to 1048 (DLEEPAEGDEEEEEEEG) show a composition bias toward acidic residues. Positions 1113–1126 (PSPSSSSLALMSRP) are enriched in low complexity. Composition is skewed to polar residues over residues 1188–1200 (SPFS…QSVH) and 1245–1256 (HSYQNPTTSSMA). A Phosphoserine modification is found at serine 1198.

In terms of assembly, can form homodimers (via C-terminus). Interacts (via C-terminus) with WDR62 (via C-terminus). Interacts with MAPK9. Interacts (via N-terminus) with NOD2; the interaction is enhanced in presence of muramyl dipeptide (MDP). Interacts with MAPK10. In terms of tissue distribution, expressed in intestinal mucosa, where it is detected in epithelial cells, endothelial cells, smooth muscle cells and immune cells, such as lymphocytes. Expressed in kidney.

The protein resides in the cytoplasm. The protein localises to the nucleus. It is found in the cytoskeleton. Its subcellular location is the spindle pole. Negative regulator of NOD2 function. It down-regulates NOD2-induced processes such as activation of NF-kappa-B signaling, IL8 secretion and antibacterial response. Involved in JNK signaling pathway. This is Mitogen-activated protein kinase-binding protein 1 (MAPKBP1) from Homo sapiens (Human).